A 391-amino-acid polypeptide reads, in one-letter code: MTSPVPRLIEQFERGLDAPICLTWELTYACNLACVHCLSSSGKRDPGELSTRQCKDIIDELERMQVFYVNIGGGEPTVRPDFWELVDYATAHHVGVKFSTNGVRITPEVATRLAATDYVDVQISLDGATAEVNDAIRGTGSFDMAVRALQNLAAAGFAGVKISVVITRRNVAQLDEFATLASRYGATLRITRLRPSGRGTDVWADLHPTADQQVQLYDWLVSKGERVLTGDSFFHLAPLGQSGALAGLNMCGAGRVVCLIDPVGDVYACPFAIHDHFLAGNVLSDGGFQNVWKNSSLFRELREPQSAGACGSCGHYDSCRGGCMAAKFFTGLPLDGPDPECVQGHSEPALARERHLPRPRADHSRGRRVSKPVPLTLSMRPPKRPCNESPV.

Residues 16–232 form the Radical SAM core domain; it reads LDAPICLTWE…KGERVLTGDS (217 aa). [4Fe-4S] cluster-binding residues include Cys30, Cys34, Cys37, Cys251, Cys258, Cys269, Cys310, Cys313, Cys319, Cys323, and Cys341. The interval 340-391 is disordered; it reads ECVQGHSEPALARERHLPRPRADHSRGRRVSKPVPLTLSMRPPKRPCNESPV. Residues 350–364 show a composition bias toward basic and acidic residues; the sequence is LARERHLPRPRADHS.

It belongs to the radical SAM superfamily. The cofactor is [4Fe-4S] cluster.

It catalyses the reaction [mycofactocin precursor peptide]-C-terminal glycyl-L-valyl-L-tyrosine + S-adenosyl-L-methionine = [mycofactocin precursor peptide]-C-terminal glycyl-N-{[2-(4-hydroxyphenyl)ethenyl]-3-methylbutanamide} + 5'-deoxyadenosine + L-methionine + CO2. The enzyme catalyses [mycofactocin precursor peptide]-C-terminal glycyl-N-{[2-(4-hydroxyphenyl)ethenyl]-3-methylbutanamide} + AH2 + S-adenosyl-L-methionine = [mycofactocin precursor peptide]-C-terminal glycyl-N-{5-[(4-hydroxyphenyl)methyl]-4,4-dimethyl-2-oxopyrrolidin-3-yl}acetamide + 5'-deoxyadenosine + L-methionine + A + H(+). In terms of biological role, radical S-adenosylmethionine (SAM) enzyme responsible for the first step of the biosynthesis of the enzyme cofactor mycofactocin (MFT). Catalyzes two reactions at the C-terminus of the mycofactocin precursor (the MftA peptide). The first one is the oxidative decarboxylation of the C-terminal L-tyrosine of MftA, forming an unsaturated tyramine moiety. The second reaction is the cross-linking of the tyramine with the penultimate L-valine residue, forming a five-membered lactam ring. Its activity requires the presence of the MftB chaperone. The protein is Mycofactocin maturase MftC (mftC) of Mycobacterium tuberculosis (strain CDC 1551 / Oshkosh).